Here is a 264-residue protein sequence, read N- to C-terminus: Small ribosomal subunit protein eS4 (264 aa).

The S4 RNA-binding domain occupies 42-104 (LPLVIIMRNR…TNENFRLLYD (63 aa)).

The protein belongs to the eukaryotic ribosomal protein eS4 family.

It is found in the cytoplasm. The sequence is that of Small ribosomal subunit protein eS4 (RPS4) from Solanum tuberosum (Potato).